Reading from the N-terminus, the 337-residue chain is MSENAANNIMETKICTDAIVSELQKKKVHLFYCLECEELARNIAAESDHITLQSINWRSFADGFPNLFINNAHDIRGQHVAFLASFSSPAVIFEQISVIYLLPRLFVASFTLVLPFFPTGSFERMEEEGDVATAFTMARIVSNIPISRGGPTSVVIYDIHALQERFYFADQVLPLFETGIPLLTKRLQQLPETEKVIVAFPDDGAWKRFHKLLDHYPTVVCTKVREGDKRIVRLKEGNPAGCHVVIVDDLVQSGGTLIECQKVLAAHGAVKVSAYVTHGVFPKSSWERFTHKKNGLEEAFAYFWITDSCPQTVKAIGNKAPFEVLSLAGSIADALQI.

An N-acetylserine modification is found at serine 2. The Mg(2+) site is built by aspartate 158 and histidine 160. The tract at residues 241–256 is binding of phosphoribosylpyrophosphate; it reads GCHVVIVDDLVQSGGT.

It belongs to the ribose-phosphate pyrophosphokinase family.

The enzyme catalyses D-ribose 5-phosphate + ATP = 5-phospho-alpha-D-ribose 1-diphosphate + AMP + H(+). The polypeptide is Ribose-phosphate pyrophosphokinase 4 (PRS4) (Arabidopsis thaliana (Mouse-ear cress)).